The sequence spans 396 residues: S-adenosylmethionine synthase (396 aa).

Position 16 (His-16) interacts with ATP. Asp-18 lines the Mg(2+) pocket. Glu-44 is a binding site for K(+). L-methionine contacts are provided by Glu-57 and Gln-100. Residues 100 to 110 (QSVDIAQGVDR) form a flexible loop region. ATP-binding positions include 165–167 (DAK), Asp-240, 246–247 (RK), Ala-263, and Lys-267. L-methionine is bound at residue Asp-240. Lys-271 contributes to the L-methionine binding site.

It belongs to the AdoMet synthase family. Homotetramer; dimer of dimers. The cofactor is Mg(2+). Requires K(+) as cofactor.

It localises to the cytoplasm. It catalyses the reaction L-methionine + ATP + H2O = S-adenosyl-L-methionine + phosphate + diphosphate. Its pathway is amino-acid biosynthesis; S-adenosyl-L-methionine biosynthesis; S-adenosyl-L-methionine from L-methionine: step 1/1. In terms of biological role, catalyzes the formation of S-adenosylmethionine (AdoMet) from methionine and ATP. The overall synthetic reaction is composed of two sequential steps, AdoMet formation and the subsequent tripolyphosphate hydrolysis which occurs prior to release of AdoMet from the enzyme. The polypeptide is S-adenosylmethionine synthase (Pseudomonas entomophila (strain L48)).